A 388-amino-acid chain; its full sequence is 3-ketoacyl-CoA thiolase (388 aa).

C91 serves as the catalytic Acyl-thioester intermediate. Active-site proton acceptor residues include H343 and C373.

This sequence belongs to the thiolase-like superfamily. Thiolase family. Heterotetramer of two alpha chains (FadB) and two beta chains (FadA).

The protein resides in the cytoplasm. It carries out the reaction an acyl-CoA + acetyl-CoA = a 3-oxoacyl-CoA + CoA. The protein operates within lipid metabolism; fatty acid beta-oxidation. Its function is as follows. Catalyzes the final step of fatty acid oxidation in which acetyl-CoA is released and the CoA ester of a fatty acid two carbons shorter is formed. In Photorhabdus laumondii subsp. laumondii (strain DSM 15139 / CIP 105565 / TT01) (Photorhabdus luminescens subsp. laumondii), this protein is 3-ketoacyl-CoA thiolase.